Reading from the N-terminus, the 144-residue chain is Large ribosomal subunit protein eL27 (144 aa).

In terms of domain architecture, KOW spans 6–43 (IKPGRLVILLNGKYAGRKAVVIKTFDDATASKSRPYGH).

This sequence belongs to the eukaryotic ribosomal protein eL27 family.

This chain is Large ribosomal subunit protein eL27 (rpl27), found in Dictyostelium discoideum (Social amoeba).